The primary structure comprises 535 residues: tRNA-2-methylthio-N(6)-dimethylallyladenosine synthase (535 aa).

In terms of domain architecture, MTTase N-terminal spans 24–139 (RTYEVRTFGC…LPRLLERARH (116 aa)). 6 residues coordinate [4Fe-4S] cluster: Cys-33, Cys-68, Cys-102, Cys-176, Cys-180, and Cys-183. Positions 162–392 (RDSSFSGWVS…IALQERISLE (231 aa)) constitute a Radical SAM core domain. The TRAM domain occupies 395-465 (EKLIGRDVEL…PHYLIADAAG (71 aa)). Residues 512–535 (RTREPLTSPGVGTMPLYDPTDGQR) form a disordered region.

Belongs to the methylthiotransferase family. MiaB subfamily. As to quaternary structure, monomer. The cofactor is [4Fe-4S] cluster.

The protein resides in the cytoplasm. It carries out the reaction N(6)-dimethylallyladenosine(37) in tRNA + (sulfur carrier)-SH + AH2 + 2 S-adenosyl-L-methionine = 2-methylsulfanyl-N(6)-dimethylallyladenosine(37) in tRNA + (sulfur carrier)-H + 5'-deoxyadenosine + L-methionine + A + S-adenosyl-L-homocysteine + 2 H(+). In terms of biological role, catalyzes the methylthiolation of N6-(dimethylallyl)adenosine (i(6)A), leading to the formation of 2-methylthio-N6-(dimethylallyl)adenosine (ms(2)i(6)A) at position 37 in tRNAs that read codons beginning with uridine. The polypeptide is tRNA-2-methylthio-N(6)-dimethylallyladenosine synthase (Leifsonia xyli subsp. xyli (strain CTCB07)).